Reading from the N-terminus, the 377-residue chain is N5-carboxyaminoimidazole ribonucleotide synthase (377 aa).

ATP-binding positions include arginine 93, lysine 133, 138–144 (GYDGKGQ), 175–178 (EEFV), glutamate 183, histidine 206, and 257–258 (NE). The ATP-grasp domain maps to 97 to 287 (KALLDHAGVR…QFENHLRAVC (191 aa)).

The protein belongs to the PurK/PurT family. As to quaternary structure, homodimer.

The catalysed reaction is 5-amino-1-(5-phospho-beta-D-ribosyl)imidazole + hydrogencarbonate + ATP = 5-carboxyamino-1-(5-phospho-D-ribosyl)imidazole + ADP + phosphate + 2 H(+). Its pathway is purine metabolism; IMP biosynthesis via de novo pathway; 5-amino-1-(5-phospho-D-ribosyl)imidazole-4-carboxylate from 5-amino-1-(5-phospho-D-ribosyl)imidazole (N5-CAIR route): step 1/2. Its function is as follows. Catalyzes the ATP-dependent conversion of 5-aminoimidazole ribonucleotide (AIR) and HCO(3)(-) to N5-carboxyaminoimidazole ribonucleotide (N5-CAIR). The polypeptide is N5-carboxyaminoimidazole ribonucleotide synthase (Vibrio vulnificus (strain CMCP6)).